An 802-amino-acid polypeptide reads, in one-letter code: MSFNHQTIEKKWQKYWLDNHTFKTTEDKDKNFYALDMFPYPSGAGLHVGHPEGYTATDIISRFKRMQGYNVLHPMGWDAFGLPAEQYAIDTGNDPAEFTEKNIATFKRQIQELGFSYDWEREINTTDPEYYKWTQWIFIQLYKKGLAYVDEVAVNWCPALGTVLSNEEVIDGVSERGGHPVIRKPMRQWVLKITEYADRLLEDLEELDWPESLKDMQRNWIGRSEGAEVAFEVENLDHSFKVFTTRPDTIYGATYAVLSPEHELVAAITSEEQAEAVKAYQEQAARKSDLERTDLAKDKTGVFTGSYAINPFNGERMPIWISDYVLASYGTGAIMAVPAHDERDFEFAKQFGLDIKPVIEGGDNTSAYTGDGAHINSGELDGLNKEEGIRRAIELLEAKGIGEKKVSYKLRDWLFSRQRYWGEPIPVITWEDGSMTTVPEEELPLMLPKTEHIKPSGTGESPLANIDEFVNVTDPVTGMKGRRETNTMPQWAGSCWYYLRYIDPKNSDMIADPELLKKWLPVDLYIGGAEHAVLHLLYARFWHKVLYDLGVVHTKEPFQKLFNQGMILGEGNEKMSKSKGNVVNPDDVVASHGADTLRLYEMFMGPLDASIAWSTNGLDGARRFLDRVYRLLVNEDGTLSEKITEQPVGSMEKVYHQTVKKVTDDYETLGFNTAISQMMVFINEGYKSEQLNIDHIRGFVKLLNPIAPHITEELWEKLGGTESITYEAWPVYDESKLVDSEVEIVIQVNGKLKQKATIAKDMDKSEMETFALSLEAVQTAIEGKTVRKVIAVPNKLVNIVAN.

Residues Pro-39–His-50 carry the 'HIGH' region motif. The short motif at Lys-574–Ser-578 is the 'KMSKS' region element. ATP is bound at residue Lys-577.

The protein belongs to the class-I aminoacyl-tRNA synthetase family.

The protein localises to the cytoplasm. It catalyses the reaction tRNA(Leu) + L-leucine + ATP = L-leucyl-tRNA(Leu) + AMP + diphosphate. The protein is Leucine--tRNA ligase of Macrococcus caseolyticus (strain JCSC5402) (Macrococcoides caseolyticum).